Reading from the N-terminus, the 429-residue chain is Glutamate-1-semialdehyde 2,1-aminomutase 2 (429 aa).

At Lys268 the chain carries N6-(pyridoxal phosphate)lysine.

This sequence belongs to the class-III pyridoxal-phosphate-dependent aminotransferase family. HemL subfamily. As to quaternary structure, homodimer. Pyridoxal 5'-phosphate serves as cofactor.

Its subcellular location is the cytoplasm. The catalysed reaction is (S)-4-amino-5-oxopentanoate = 5-aminolevulinate. It functions in the pathway porphyrin-containing compound metabolism; protoporphyrin-IX biosynthesis; 5-aminolevulinate from L-glutamyl-tRNA(Glu): step 2/2. The protein is Glutamate-1-semialdehyde 2,1-aminomutase 2 of Listeria monocytogenes serotype 4a (strain HCC23).